The following is a 243-amino-acid chain: Type II restriction enzyme NlaIV (243 aa).

The catalysed reaction is Endonucleolytic cleavage of DNA to give specific double-stranded fragments with terminal 5'-phosphates.. Its function is as follows. A P subtype restriction enzyme that recognizes the double-stranded sequence 5'-GGNNCC-3' and cleaves after N-3. In Neisseria lactamica, this protein is Type II restriction enzyme NlaIV (nlaIVR).